Reading from the N-terminus, the 615-residue chain is DNA mismatch repair protein MutL (615 aa).

Residues 363-397 are disordered; it reads FAEPAAREPVAPRYTPAPASGSRPAAPWPNAQPGY. Over residues 364-391 the composition is skewed to low complexity; sequence AEPAAREPVAPRYTPAPASGSRPAAPWP.

This sequence belongs to the DNA mismatch repair MutL/HexB family.

Functionally, this protein is involved in the repair of mismatches in DNA. It is required for dam-dependent methyl-directed DNA mismatch repair. May act as a 'molecular matchmaker', a protein that promotes the formation of a stable complex between two or more DNA-binding proteins in an ATP-dependent manner without itself being part of a final effector complex. The polypeptide is DNA mismatch repair protein MutL (Shigella boydii serotype 4 (strain Sb227)).